The sequence spans 301 residues: Putative S-adenosyl-L-methionine-dependent methyltransferase BCG_0775c (301 aa).

S-adenosyl-L-methionine is bound by residues D130 and D159–L160.

It belongs to the UPF0677 family.

Functionally, exhibits S-adenosyl-L-methionine-dependent methyltransferase activity. This chain is Putative S-adenosyl-L-methionine-dependent methyltransferase BCG_0775c, found in Mycobacterium bovis (strain BCG / Pasteur 1173P2).